The chain runs to 201 residues: ATP-dependent Clp protease proteolytic subunit (201 aa).

S101 functions as the Nucleophile in the catalytic mechanism. H126 is a catalytic residue.

It belongs to the peptidase S14 family. As to quaternary structure, fourteen ClpP subunits assemble into 2 heptameric rings which stack back to back to give a disk-like structure with a central cavity, resembling the structure of eukaryotic proteasomes.

The protein localises to the cytoplasm. It catalyses the reaction Hydrolysis of proteins to small peptides in the presence of ATP and magnesium. alpha-casein is the usual test substrate. In the absence of ATP, only oligopeptides shorter than five residues are hydrolyzed (such as succinyl-Leu-Tyr-|-NHMec, and Leu-Tyr-Leu-|-Tyr-Trp, in which cleavage of the -Tyr-|-Leu- and -Tyr-|-Trp bonds also occurs).. Functionally, cleaves peptides in various proteins in a process that requires ATP hydrolysis. Has a chymotrypsin-like activity. Plays a major role in the degradation of misfolded proteins. The chain is ATP-dependent Clp protease proteolytic subunit from Francisella philomiragia subsp. philomiragia (strain ATCC 25017 / CCUG 19701 / FSC 153 / O#319-036).